Here is a 268-residue protein sequence, read N- to C-terminus: MSGTTHHHATFPAVEAAAFTRRHLDDLAAGLLGTVRVPGFFGRPALDTMLTSLHRVPVVSFDLDRMHHPMARFGTALNDYRTPELALDADRYWHDADTARRQWAGIGMTPDPLELALDALGRAWGVRPAPATIGGRPAFVGMLREVNDGTFIHYDDINREYRGGLFDQKIVAQLAFNAWLAAPREGGTTTVWRHRWEPADENRRHGYGFQPTAVADDPYVTVAPAAGDALLFNANNYHVVHPGAPGQRRIALACFLGVTAGGELVVWS.

It depends on Fe(2+) as a cofactor.

The catalysed reaction is L-gamma-glutamyl-L-propargylglycine + 2-oxoglutarate + O2 = L-gamma-glutamyl-(3R)-L-beta-ethynylserine + succinate + CO2. The protein operates within amino-acid metabolism. Its pathway is antibiotic biosynthesis. Its function is as follows. Involved in the biosynthesis of terminal alkyne-containing amino acids such as L-beta-ethynylserine, that are produced as antibiotics by S.cattleya. Catalyzes the hydroxylation of the dipeptide L-gamma-glutamyl-L-propargylglycine, leading to L-gamma-glutamyl-L-beta-ethynylserine. Cannot use L-propargylglycine as substrate. The protein is L-gamma-glutamyl-L-propargylglycine hydroxylase of Streptantibioticus cattleyicolor (strain ATCC 35852 / DSM 46488 / JCM 4925 / NBRC 14057 / NRRL 8057) (Streptomyces cattleya).